The following is a 406-amino-acid chain: Ribose-phosphate pyrophosphokinase 3, mitochondrial (406 aa).

A disordered region spans residues 1–32 (MAATPHRHLLQPCKNPAISSSETLKPSSSFSL). The N-terminal 87 residues, 1-87 (MAATPHRHLL…RRFQMSSNQE (87 aa)), are a transit peptide targeting the mitochondrion. The span at 18–32 (ISSSETLKPSSSFSL) shows a compositional bias: low complexity. Mg(2+)-binding residues include Asp226 and His228. The segment at 309–324 (GRHVVIVDDLVQSGGT) is binding of phosphoribosylpyrophosphate.

The protein belongs to the ribose-phosphate pyrophosphokinase family.

It is found in the mitochondrion. It carries out the reaction D-ribose 5-phosphate + ATP = 5-phospho-alpha-D-ribose 1-diphosphate + AMP + H(+). This is Ribose-phosphate pyrophosphokinase 3, mitochondrial (PRS3) from Spinacia oleracea (Spinach).